Consider the following 412-residue polypeptide: Orcinol synthase (412 aa).

Catalysis depends on residues Cys164, His322, and Asn355.

It belongs to the thiolase-like superfamily. Chalcone/stilbene synthases family. In terms of assembly, homodimer. As to expression, mainly expressed in young leaves, and barely in mature leaves and twigs.

The catalysed reaction is 3 malonyl-CoA + acetyl-CoA + 3 H(+) = orcinol + 4 CO2 + 4 CoA. The enzyme catalyses 3 malonyl-CoA + acetyl-CoA + 2 H(+) = orsellinate + 3 CO2 + 4 CoA. It catalyses the reaction 3 malonyl-CoA + acetyl-CoA + 3 H(+) = tetraacetate lactone + 3 CO2 + 4 CoA. It carries out the reaction 2 malonyl-CoA + acetyl-CoA + 2 H(+) = triacetate lactone + 2 CO2 + 3 CoA. The catalysed reaction is 3 malonyl-CoA + acetyl-CoA + 3 H(+) = 2-acetylphloroglucinol + 3 CO2 + 4 CoA. It participates in secondary metabolite biosynthesis; terpenoid biosynthesis. Functionally, involved in the biosynthesis of acetate-derived aromatic tetraketides natural products, precursors of daurichromenic acid, an anti-human immunodeficiency viruses (HIV) meroterpenoid consisting of sesquiterpene and orsellinic acid (OSA) moieties. Accepts acetyl-CoA as starter substrate and produces orcinol as the major reaction product, along with four minor products including OSA, tetraacetate lactone, triacetate lactone and 2-acetylphloroglucinol. In Rhododendron dauricum (Azalea daurica), this protein is Orcinol synthase.